Here is a 206-residue protein sequence, read N- to C-terminus: Ribosomal RNA small subunit methyltransferase G (206 aa).

Residues G73, L78, V124–E125, and R139 contribute to the S-adenosyl-L-methionine site.

The protein belongs to the methyltransferase superfamily. RNA methyltransferase RsmG family.

It localises to the cytoplasm. It catalyses the reaction guanosine(527) in 16S rRNA + S-adenosyl-L-methionine = N(7)-methylguanosine(527) in 16S rRNA + S-adenosyl-L-homocysteine. In terms of biological role, specifically methylates the N7 position of guanine in position 527 of 16S rRNA. In Serratia proteamaculans (strain 568), this protein is Ribosomal RNA small subunit methyltransferase G.